The sequence spans 434 residues: Nicotinate phosphoribosyltransferase (434 aa).

Histidine 242 carries the phosphohistidine; by autocatalysis modification.

The protein belongs to the NAPRTase family. In terms of processing, transiently phosphorylated on a His residue during the reaction cycle. Phosphorylation strongly increases the affinity for substrates and increases the rate of nicotinate D-ribonucleotide production. Dephosphorylation regenerates the low-affinity form of the enzyme, leading to product release.

The catalysed reaction is nicotinate + 5-phospho-alpha-D-ribose 1-diphosphate + ATP + H2O = nicotinate beta-D-ribonucleotide + ADP + phosphate + diphosphate. It participates in cofactor biosynthesis; NAD(+) biosynthesis; nicotinate D-ribonucleotide from nicotinate: step 1/1. In terms of biological role, catalyzes the synthesis of beta-nicotinate D-ribonucleotide from nicotinate and 5-phospho-D-ribose 1-phosphate at the expense of ATP. The chain is Nicotinate phosphoribosyltransferase from Sinorhizobium medicae (strain WSM419) (Ensifer medicae).